Reading from the N-terminus, the 82-residue chain is MAAKKEFNIFDHVLVPEHRILSEEEKEELLKKYRIRISQLPQIKASDPAVVALGAKPGDVIEIKRKSPTAGYYYYYRLVVED.

Belongs to the archaeal Rpo5/eukaryotic RPB5 RNA polymerase subunit family. In terms of assembly, part of the RNA polymerase complex.

It localises to the cytoplasm. The catalysed reaction is RNA(n) + a ribonucleoside 5'-triphosphate = RNA(n+1) + diphosphate. In terms of biological role, DNA-dependent RNA polymerase (RNAP) catalyzes the transcription of DNA into RNA using the four ribonucleoside triphosphates as substrates. This is DNA-directed RNA polymerase subunit Rpo5 from Thermococcus kodakarensis (strain ATCC BAA-918 / JCM 12380 / KOD1) (Pyrococcus kodakaraensis (strain KOD1)).